We begin with the raw amino-acid sequence, 444 residues long: C4-dicarboxylate transport protein 1 (444 aa).

Helical transmembrane passes span S9–P29, F42–I62, S78–Y98, I152–Q172, I190–T210, L221–G241, F307–A327, V354–V374, and F380–I400.

Belongs to the dicarboxylate/amino acid:cation symporter (DAACS) (TC 2.A.23) family.

It is found in the cell inner membrane. Functionally, responsible for the transport of dicarboxylates such as succinate, fumarate, and malate from the periplasm across the membrane. This chain is C4-dicarboxylate transport protein 1, found in Pseudomonas paraeruginosa (strain DSM 24068 / PA7) (Pseudomonas aeruginosa (strain PA7)).